Reading from the N-terminus, the 197-residue chain is uncharacterized protein (197 aa).

4 helical membrane passes run 11-31 (IALIVVGIIALFLPWLTISAS), 85-105 (STFMMIFGIIPIILYIASIFV), 109-129 (AVVVGAGIAGITCASIFVVLF), and 174-194 (VGTGWYLTMIIGLALIAYPFI).

It localises to the cell membrane. This is an uncharacterized protein from Methanocaldococcus jannaschii (strain ATCC 43067 / DSM 2661 / JAL-1 / JCM 10045 / NBRC 100440) (Methanococcus jannaschii).